A 119-amino-acid polypeptide reads, in one-letter code: Iron-sulfur cluster insertion protein ErpA (119 aa).

Positions 47, 111, and 113 each coordinate iron-sulfur cluster.

This sequence belongs to the HesB/IscA family. In terms of assembly, homodimer. Iron-sulfur cluster is required as a cofactor.

In terms of biological role, required for insertion of 4Fe-4S clusters for at least IspG. The protein is Iron-sulfur cluster insertion protein ErpA of Blochmanniella floridana.